A 305-amino-acid polypeptide reads, in one-letter code: ATP synthase gamma chain (305 aa).

The protein belongs to the ATPase gamma chain family. F-type ATPases have 2 components, CF(1) - the catalytic core - and CF(0) - the membrane proton channel. CF(1) has five subunits: alpha(3), beta(3), gamma(1), delta(1), epsilon(1). CF(0) has three main subunits: a, b and c.

Its subcellular location is the cell membrane. Functionally, produces ATP from ADP in the presence of a proton gradient across the membrane. The gamma chain is believed to be important in regulating ATPase activity and the flow of protons through the CF(0) complex. The protein is ATP synthase gamma chain of Mycobacterium tuberculosis (strain ATCC 25177 / H37Ra).